The sequence spans 205 residues: Transcriptional regulator GfcR (205 aa).

This sequence belongs to the purine/pyrimidine phosphoribosyltransferase family. GfcR subfamily.

The protein is Transcriptional regulator GfcR of Methanococcus maripaludis (strain C7 / ATCC BAA-1331).